The sequence spans 313 residues: N-acetyl-gamma-glutamyl-phosphate reductase (313 aa).

Cys117 is a catalytic residue.

It belongs to the NAGSA dehydrogenase family. Type 2 subfamily.

The protein resides in the cytoplasm. It catalyses the reaction N-acetyl-L-glutamate 5-semialdehyde + phosphate + NADP(+) = N-acetyl-L-glutamyl 5-phosphate + NADPH + H(+). It functions in the pathway amino-acid biosynthesis; L-arginine biosynthesis; N(2)-acetyl-L-ornithine from L-glutamate: step 3/4. In terms of biological role, catalyzes the NADPH-dependent reduction of N-acetyl-5-glutamyl phosphate to yield N-acetyl-L-glutamate 5-semialdehyde. This Burkholderia cenocepacia (strain HI2424) protein is N-acetyl-gamma-glutamyl-phosphate reductase.